The sequence spans 226 residues: RING-H2 finger protein ATL75 (226 aa).

The chain crosses the membrane as a helical span at residues 60-80 (LMLLSVLICGIICCLGLHYII). Residues 136-178 (CVICLSDFVSGEQIRMLPKCHHGFHVRCIDKWLQQHLTCPKCR) form an RING-type; atypical zinc finger.

The protein belongs to the RING-type zinc finger family. ATL subfamily.

It is found in the membrane. It carries out the reaction S-ubiquitinyl-[E2 ubiquitin-conjugating enzyme]-L-cysteine + [acceptor protein]-L-lysine = [E2 ubiquitin-conjugating enzyme]-L-cysteine + N(6)-ubiquitinyl-[acceptor protein]-L-lysine.. It functions in the pathway protein modification; protein ubiquitination. The chain is RING-H2 finger protein ATL75 (ATL75) from Arabidopsis thaliana (Mouse-ear cress).